The sequence spans 65 residues: Alpha-conotoxin BnIA (65 aa).

The N-terminal stretch at methionine 1–serine 21 is a signal peptide. Positions phenylalanine 22–lysine 48 are excised as a propeptide. 2 disulfides stabilise this stretch: cysteine 50–cysteine 56 and cysteine 51–cysteine 64. The tract at residues serine 52–proline 54 is ser-Xaa-Pro motif, crucial for potent interaction with nAChR. Cysteine 64 carries the cysteine amide modification.

Belongs to the conotoxin A superfamily. Expressed by the venom duct.

Its subcellular location is the secreted. Its function is as follows. Alpha-conotoxins act on postsynaptic membranes, they bind to the nicotinic acetylcholine receptors (nAChR) and thus inhibit them. This toxin inhibits acetylcholine-evoked currents reversibly in oocytes expressing the human alpha-7/CHRNA7 nAChR, and blocks nerve-evoked skeletal muscle contractions in isolated mouse neuromuscular preparations, but with a very low affinity. The polypeptide is Alpha-conotoxin BnIA (Conus bandanus (Banded marble cone)).